The chain runs to 249 residues: Chromosome-partitioning ATPase Soj (249 aa).

Residues Lys-15, Gly-16, Gly-17, Val-18, Gly-19, Lys-20, Thr-21, Thr-22, Pro-207, and Asn-209 each coordinate ATP. Residue Gly-17 coordinates ADP. The ADP site is built by Gly-19, Lys-20, Thr-21, Thr-22, Pro-207, and Asn-209. Thr-21 is a binding site for Mg(2+).

This sequence belongs to the ParA family. As to quaternary structure, monomer in the absence of nucleotides or presence of ADP, in the presence of ATP is found in a monomer-dimer equilibrium. ATP-binding is required for DNA-binding. Probably interacts with Spo0J.

It catalyses the reaction ATP + H2O = ADP + phosphate + H(+). Its activity is regulated as follows. ATPase activity is stimulated 10-fold in the presence of Spo0J and parS DNA (a plasmid centromere-like site or plasmid DNA itself). The first 20 residues of Spo0J stimulate its ATPase activity by 8%. In terms of biological role, ATPase probably involved in chromosome partitioning. Cooperatively binds dsDNA, forming nucleoprotein filaments in a strictly ATP-dependent fashion. Can also bind ssDNA with lower affinity. This is Chromosome-partitioning ATPase Soj from Thermus thermophilus (strain ATCC BAA-163 / DSM 7039 / HB27).